We begin with the raw amino-acid sequence, 299 residues long: ATP synthase gamma chain (299 aa).

Belongs to the ATPase gamma chain family. As to quaternary structure, F-type ATPases have 2 components, CF(1) - the catalytic core - and CF(0) - the membrane proton channel. CF(1) has five subunits: alpha(3), beta(3), gamma(1), delta(1), epsilon(1). CF(0) has three main subunits: a, b and c.

Its subcellular location is the cell membrane. Its function is as follows. Produces ATP from ADP in the presence of a proton gradient across the membrane. The gamma chain is believed to be important in regulating ATPase activity and the flow of protons through the CF(0) complex. This is ATP synthase gamma chain from Leifsonia xyli subsp. xyli (strain CTCB07).